Reading from the N-terminus, the 293-residue chain is Ethanolamine ammonia-lyase small subunit (293 aa).

Residues Val-207 and Glu-228 each contribute to the adenosylcob(III)alamin site.

It belongs to the EutC family. The basic unit is a heterodimer which dimerizes to form tetramers. The heterotetramers trimerize; 6 large subunits form a core ring with 6 small subunits projecting outwards. Adenosylcob(III)alamin serves as cofactor.

Its subcellular location is the bacterial microcompartment. The catalysed reaction is ethanolamine = acetaldehyde + NH4(+). It functions in the pathway amine and polyamine degradation; ethanolamine degradation. Its function is as follows. Catalyzes the deamination of various vicinal amino-alcohols to oxo compounds. Allows this organism to utilize ethanolamine as the sole source of nitrogen and carbon in the presence of external vitamin B12. The sequence is that of Ethanolamine ammonia-lyase small subunit from Listeria monocytogenes serovar 1/2a (strain ATCC BAA-679 / EGD-e).